Consider the following 192-residue polypeptide: Cytidylate kinase (192 aa).

7–15 serves as a coordination point for ATP; it reads GPPGSGKST.

Belongs to the cytidylate kinase family. Type 2 subfamily.

It is found in the cytoplasm. It carries out the reaction CMP + ATP = CDP + ADP. The catalysed reaction is dCMP + ATP = dCDP + ADP. In Halobacterium salinarum (strain ATCC 29341 / DSM 671 / R1), this protein is Cytidylate kinase.